A 282-amino-acid polypeptide reads, in one-letter code: MSCGRPPPDVDGMITLKVDNLTYRTSPDSLRRVFEKYGRVGDVYIPREPHTKAPRGFAFVRFHDRRDAQDAEAAMDGAELDGRELRVQVARYGRRDLPRSRQGEPRGRSRGGGYGRRSRSYGRRSRSPRRRHRSRSRGPSCSRSRSRSRYRGSRYSRSPYSRSPYSRSRYSRSPYSRSRYRESRYGGSHYSSSGYSNSRYSRYHSSRSHSKSGSSTSSRSASTSKSSSARRSKSSSVSRSRSRSRSSSMTRSPPRVSKRKSKSRSRSKRPPKSPEEEGQMSS.

At Ser2 the chain carries N-acetylserine. Ser2 and Ser26 each carry phosphoserine. The 79-residue stretch at 14–92 (ITLKVDNLTY…RELRVQVARY (79 aa)) folds into the RRM domain. A disordered region spans residues 91 to 282 (RYGRRDLPRS…SPEEEGQMSS (192 aa)). A compositionally biased stretch (basic and acidic residues) spans 93 to 107 (GRRDLPRSRQGEPRG). Composition is skewed to basic residues over residues 116 to 136 (RRSR…RSRS) and 144 to 154 (SRSRSRYRGSR). 2 stretches are compositionally biased toward low complexity: residues 155–177 (YSRS…PYSR) and 185–200 (YGGS…NSRY). 5 positions are modified to phosphoserine: Ser156, Ser158, Ser171, Ser173, and Ser196. Basic residues predominate over residues 201–210 (SRYHSSRSHS). Low complexity-rich tracts occupy residues 211-227 (KSGS…SKSS) and 234-255 (SSSV…SPPR). Residues 256-271 (VSKRKSKSRSRSKRPP) show a composition bias toward basic residues. Position 273 is a phosphoserine (Ser273).

It belongs to the splicing factor SR family. In terms of tissue distribution, strongly expressed in pancreas, spleen and prostate. Weakly expressed in lung, liver and thymus.

It localises to the nucleus. Functionally, involved in pre-mRNA alternative splicing. The protein is Serine/arginine-rich splicing factor 8 (SRSF8) of Homo sapiens (Human).